Here is a 601-residue protein sequence, read N- to C-terminus: MTAKPIDTIRNFSIVAHIDHGKSTLADRLIQLTGALSAREMTEQVLDSMDIERERGITIKAQTVRLDYKAQDGREYVLNLMDTPGHVDFTYEVSRSLAACEGSLLVVDASQGVEAQTLANVYQAIDANHEIVPVLNKIDLPAAEPDRVKEQIEEVIGIDASEAVPISAKTGLNIEAVLEAIVAKLPPPKGDCEAPLKALLVDSWYDVYLGVVVLVRIVDGVLRKGMTIRMMGADAVYGVDRVGVFRPKMQDVAELGPGEVGFLTASIKEVADTRVGDTITEDRRPTDQALPGFKPVQPVVFCGLFPVDAAEFENLRAAMGKLRLNDASFSYEMETSAALGFGFRCGFLGLLHLEIIQERLEREFNLDLISTAPSVVYRLNMADGTMRELHNPADMPDVMKIDTIEEPWIRATILTPDDYLGGVLKLCQDRRGAQIDLNYVGKRAMVVYDLPLNEVVFDFYDRLKSISKGYASFDYHISDYREGDLVKMSILVNAEPVDALSMLVHRTRAESRGRAMCEKLKDLIPRHLFQIPVQAAIGGKIIARETIRALSKDVTAKCYGGDISRKRKLLDKQKEGKKRMRQFGKVEIPQEAFIAALKMDS.

The region spanning 7-189 (DTIRNFSIVA…AIVAKLPPPK (183 aa)) is the tr-type G domain. GTP contacts are provided by residues 19 to 24 (DHGKST) and 136 to 139 (NKID).

Belongs to the TRAFAC class translation factor GTPase superfamily. Classic translation factor GTPase family. LepA subfamily.

It localises to the cell inner membrane. It carries out the reaction GTP + H2O = GDP + phosphate + H(+). Required for accurate and efficient protein synthesis under certain stress conditions. May act as a fidelity factor of the translation reaction, by catalyzing a one-codon backward translocation of tRNAs on improperly translocated ribosomes. Back-translocation proceeds from a post-translocation (POST) complex to a pre-translocation (PRE) complex, thus giving elongation factor G a second chance to translocate the tRNAs correctly. Binds to ribosomes in a GTP-dependent manner. This chain is Elongation factor 4, found in Methylobacterium sp. (strain 4-46).